Reading from the N-terminus, the 633-residue chain is Leucine-rich repeat and IQ domain-containing protein 3 (633 aa).

3 LRR repeats span residues 51 to 72, 73 to 94, and 98 to 119; these read SLRVCIFSNNFLTDIQPLQSCK, KLIKLDLHGNQIKTLPDKNFWS, and NLKLLYLHDNGFSKLKNICVLS. An LRRCT domain is found at 132-179; the sequence is CPVSLKKGYRHVLVNSIWPLKALDHHVISDEEIIQNWRLPERFKTFSP. In terms of domain architecture, IQ spans 215 to 244; that stretch reads HNSPVLIIQRWIRGFIVRKHLSPYFKHKKH. The disordered stretch occupies residues 324–343; sequence SKQPRHHIHKGQKAMKAESE. The span at 325-336 shows a compositional bias: basic residues; that stretch reads KQPRHHIHKGQK. Residues 556-617 are a coiled coil; that stretch reads IEKWEEQKYK…AKVEYIKTFY (62 aa).

This chain is Leucine-rich repeat and IQ domain-containing protein 3 (Lrriq3), found in Mus musculus (Mouse).